We begin with the raw amino-acid sequence, 631 residues long: Transmembrane and coiled-coil domain-containing protein 4 (631 aa).

The tract at residues 1–26 is disordered; that stretch reads MATWNRPHPRLPVAPEPVAEGESQQP. Positions 153 to 183 form a coiled coil; sequence EEVFLESLKDAKEEESETAEESRKRKEKRRK. 4 helical membrane-spanning segments follow: residues 187 to 203, 204 to 220, 228 to 248, and 343 to 363; these read YLLI…VIGV, TGGL…ATII, LGSV…GAGL, and LSGI…ANVI. A disordered region spans residues 523–631; the sequence is WSEKGLPLAP…ETQESCAELD (109 aa). Positions 571–590 are enriched in polar residues; that stretch reads IPSSASQAQVPAGLDQSTED.

It belongs to the TMCO4 family.

The protein resides in the membrane. In Rattus norvegicus (Rat), this protein is Transmembrane and coiled-coil domain-containing protein 4 (Tmco4).